A 208-amino-acid chain; its full sequence is Ras-related protein Rab-6 (208 aa).

Residues 14–21 (DQSVGKTS), threonine 38, 62–66 (TAGQE), and 120–123 (KTDL) contribute to the GTP site. Cysteine 208 is lipidated: S-geranylgeranyl cysteine.

It belongs to the small GTPase superfamily. Rab family.

Protein transport. Probably involved in vesicular traffic. This is Ras-related protein Rab-6 (rab6) from Dictyostelium discoideum (Social amoeba).